Reading from the N-terminus, the 204-residue chain is Holliday junction branch migration complex subunit RuvA (204 aa).

Positions 1–64 (MIGRLRGTLI…EDAQLLYGFN (64 aa)) are domain I. The segment at 65–143 (TVSERALFRE…GWGAGDLFTP (79 aa)) is domain II. Residues 144-155 (ATDAAPVDSTPV) form a flexible linker region. The tract at residues 156 to 204 (IAQNAQEEAMSALLALGYKPPQASKAVSQVAKAGMSSEELIREALKSMV) is domain III.

It belongs to the RuvA family. In terms of assembly, homotetramer. Forms an RuvA(8)-RuvB(12)-Holliday junction (HJ) complex. HJ DNA is sandwiched between 2 RuvA tetramers; dsDNA enters through RuvA and exits via RuvB. An RuvB hexamer assembles on each DNA strand where it exits the tetramer. Each RuvB hexamer is contacted by two RuvA subunits (via domain III) on 2 adjacent RuvB subunits; this complex drives branch migration. In the full resolvosome a probable DNA-RuvA(4)-RuvB(12)-RuvC(2) complex forms which resolves the HJ.

The protein resides in the cytoplasm. Functionally, the RuvA-RuvB-RuvC complex processes Holliday junction (HJ) DNA during genetic recombination and DNA repair, while the RuvA-RuvB complex plays an important role in the rescue of blocked DNA replication forks via replication fork reversal (RFR). RuvA specifically binds to HJ cruciform DNA, conferring on it an open structure. The RuvB hexamer acts as an ATP-dependent pump, pulling dsDNA into and through the RuvAB complex. HJ branch migration allows RuvC to scan DNA until it finds its consensus sequence, where it cleaves and resolves the cruciform DNA. The sequence is that of Holliday junction branch migration complex subunit RuvA from Vibrio cholerae serotype O1 (strain ATCC 39541 / Classical Ogawa 395 / O395).